Reading from the N-terminus, the 137-residue chain is Ribosomal RNA large subunit methyltransferase H (137 aa).

S-adenosyl-L-methionine contacts are provided by residues L56, G85, and 104–109 (LSPLTF).

Belongs to the RNA methyltransferase RlmH family. Homodimer.

The protein resides in the cytoplasm. The catalysed reaction is pseudouridine(1915) in 23S rRNA + S-adenosyl-L-methionine = N(3)-methylpseudouridine(1915) in 23S rRNA + S-adenosyl-L-homocysteine + H(+). Its function is as follows. Specifically methylates the pseudouridine at position 1915 (m3Psi1915) in 23S rRNA. The protein is Ribosomal RNA large subunit methyltransferase H of Prochlorococcus marinus (strain MIT 9515).